A 726-amino-acid chain; its full sequence is Catalase-peroxidase (726 aa).

Residues 1 to 33 (MSTSDDIHNTTATGKCPFHQGGHDQSAGGGTTT) are disordered. Positions 105–226 (WHGAGTYRSI…LGATEMGLIY (122 aa)) form a cross-link, tryptophyl-tyrosyl-methioninium (Trp-Tyr) (with M-252). His-106 acts as the Proton acceptor in catalysis. A cross-link (tryptophyl-tyrosyl-methioninium (Tyr-Met) (with W-105)) is located at residues 226–252 (YVNPEGPDHSGEPLSAAAAIRATFGNM). His-267 contacts heme b.

Belongs to the peroxidase family. Peroxidase/catalase subfamily. Homodimer or homotetramer. Heme b is required as a cofactor. Formation of the three residue Trp-Tyr-Met cross-link is important for the catalase, but not the peroxidase activity of the enzyme.

The catalysed reaction is H2O2 + AH2 = A + 2 H2O. It carries out the reaction 2 H2O2 = O2 + 2 H2O. Bifunctional enzyme with both catalase and broad-spectrum peroxidase activity. The chain is Catalase-peroxidase from Escherichia coli O1:K1 / APEC.